The sequence spans 174 residues: Caltractin ICL1e (174 aa).

A disordered region spans residues 1–33 (MSKKQQAPVAQKPVGKQQQVNRKPQDRPGLTED). EF-hand domains are found at residues 33 to 68 (DEIEEIKEAFNLFDTEGTGRVDPRELKAAMQSLGFD), 88 to 103 (IDFDQFLDAITSKLGN), 105 to 140 (ESRDGINKIFDLFDDDGSNSINLNNLKRVSKELGET), and 141 to 174 (MTAEELAEMLERAASNGRDISREDFYNIMVKRTF).

The protein belongs to the centrin family. As to quaternary structure, monomer.

Its subcellular location is the cytoplasm. The protein resides in the cytoskeleton. Functionally, plays a fundamental role in microtubule organizing center structure and function. Component of the infraciliary lattice (ICL) and the ciliary basal bodies. The chain is Caltractin ICL1e (Icl1e) from Paramecium tetraurelia.